The chain runs to 634 residues: Probable potassium transport system protein Kup (634 aa).

12 helical membrane passes run 21–41 (IILS…LYTL), 61–81 (ILSL…VAVI), 110–130 (IYIV…DGVI), 148–168 (PHMK…LFLC), 180–200 (FGPI…YNIA), 217–237 (FFLE…LAVT), 258–278 (WMYV…ALVL), 296–316 (GLYP…QALI), 348–368 (IYVP…VIGF), 377–397 (AYGV…IIYA), 408–428 (LWMM…ANII), and 432–452 (DGAW…RTWL).

The protein belongs to the HAK/KUP transporter (TC 2.A.72) family.

The protein localises to the cell inner membrane. It catalyses the reaction K(+)(in) + H(+)(in) = K(+)(out) + H(+)(out). Functionally, transport of potassium into the cell. Likely operates as a K(+):H(+) symporter. The sequence is that of Probable potassium transport system protein Kup from Xylella fastidiosa (strain 9a5c).